We begin with the raw amino-acid sequence, 403 residues long: MSNYDRVPCSIAIPNQQVEIQQQPRVFEDQESPVKTKVQQPPPEQVRVPPTVIGATATAKKKSCLSTTSSRKEPPAHPALRRKTVAFGRTVNVSQTVEGTSRHTKKAIASPSQNHRMTEENQEENWRDVMKNEFEVMRKEMQEEATKKQEELNAQNLNKMQEMMSQFFQQITVAKPSAEESQDREKENWYEQSRHARQQKPANKIAKAREIIKREGSIPPEALPILEQRIRTDPMFRQQIDNVLADAECDANRAAYSPLPPLSPPSGRYANGSSGNPALMRETLTVERSIRYDNGLSSIDSRQWTSERNDNRTHDNYRPYEPDPQLQSMYQKGQSVSYYPSEAVGKAHRNNRLEYHVEEVPEYEEEETEVGGRGRGRKYHEPMETESAAERERRIREKYSRRK.

2 disordered regions span residues Pro-24–Ala-79 and Thr-96–Arg-127. Residues Arg-116 to Arg-127 show a composition bias toward basic and acidic residues. Residues Asp-128–Met-163 adopt a coiled-coil conformation. Disordered regions lie at residues Ala-174–Ile-205, Ala-255–Asn-276, Arg-302–Gln-325, and Tyr-355–Lys-403. Positions Ser-177–Arg-194 are enriched in basic and acidic residues. Basic and acidic residues predominate over residues Thr-305–Glu-321. The span at Val-360–Glu-369 shows a compositional bias: acidic residues. A compositionally biased stretch (basic and acidic residues) spans Tyr-379–Lys-403.

Interacts with sas-6 via its coiled coil domain.

It localises to the cytoplasm. The protein localises to the cytoskeleton. The protein resides in the microtubule organizing center. Its subcellular location is the centrosome. It is found in the centriole. Its function is as follows. Required for centrosome duplication. Essential for daughter-centriole formation. Requires both maternal and partenal expression, suggesting that it regulates centriole duplication during both spermatogenesis and early embryogenesis. This chain is Spindle assembly abnormal protein 5 (sas-5), found in Caenorhabditis briggsae.